The chain runs to 415 residues: D-threonate kinase (415 aa).

Substrate is bound by residues Asp-9, Arg-53, and 81-84 (KIDS). ATP-binding positions include Ser-251, 345–348 (GGET), and Gly-392.

It belongs to the four-carbon acid sugar kinase family.

The enzyme catalyses D-threonate + ATP = 4-O-phospho-D-threonate + ADP + H(+). Its function is as follows. Catalyzes the ATP-dependent phosphorylation of D-threonate to D-threonate 4-phosphate. Can also phosphorylate 4-hydroxy-L-threonine, with lower efficiency. The sequence is that of D-threonate kinase from Cupriavidus necator (strain ATCC 17699 / DSM 428 / KCTC 22496 / NCIMB 10442 / H16 / Stanier 337) (Ralstonia eutropha).